The following is a 111-amino-acid chain: Photosystem II reaction center Psb28 protein (111 aa).

Belongs to the Psb28 family. As to quaternary structure, part of the photosystem II complex.

The protein resides in the cellular thylakoid membrane. This chain is Photosystem II reaction center Psb28 protein, found in Trichormus variabilis (strain ATCC 29413 / PCC 7937) (Anabaena variabilis).